A 78-amino-acid chain; its full sequence is Large ribosomal subunit protein bL28 (78 aa).

The interval 1–21 (MSRVCQVTGKKPMVGNNRSHA) is disordered.

It belongs to the bacterial ribosomal protein bL28 family.

This chain is Large ribosomal subunit protein bL28, found in Shewanella baltica (strain OS223).